We begin with the raw amino-acid sequence, 297 residues long: N-acetylmuramic acid 6-phosphate etherase (297 aa).

An SIS domain is found at 56-219 (AIEAFNKGGR…STISMIGIGK (164 aa)). Catalysis depends on Glu-84, which acts as the Proton donor. Glu-115 is a catalytic residue.

The protein belongs to the GCKR-like family. MurNAc-6-P etherase subfamily. Homodimer.

It catalyses the reaction N-acetyl-D-muramate 6-phosphate + H2O = N-acetyl-D-glucosamine 6-phosphate + (R)-lactate. Its pathway is amino-sugar metabolism; N-acetylmuramate degradation. In terms of biological role, specifically catalyzes the cleavage of the D-lactyl ether substituent of MurNAc 6-phosphate, producing GlcNAc 6-phosphate and D-lactate. The chain is N-acetylmuramic acid 6-phosphate etherase from Lactococcus lactis subsp. lactis (strain IL1403) (Streptococcus lactis).